A 331-amino-acid polypeptide reads, in one-letter code: Nucleotide-binding protein SGR_5570 (331 aa).

Positions 1 to 43 are disordered; it reads MTENTHETAPNTADTDTADFDTADTDRADGAADVSTNTPNETG. Position 55-62 (55-62) interacts with ATP; the sequence is GMSGAGRS. 106–109 provides a ligand contact to GTP; it reads DVRG.

This sequence belongs to the RapZ-like family.

Functionally, displays ATPase and GTPase activities. The sequence is that of Nucleotide-binding protein SGR_5570 from Streptomyces griseus subsp. griseus (strain JCM 4626 / CBS 651.72 / NBRC 13350 / KCC S-0626 / ISP 5235).